A 115-amino-acid polypeptide reads, in one-letter code: Non-specific lipid-transfer protein 3 (115 aa).

An N-terminal signal peptide occupies residues 1–23 (MAFALRFFTCLVLTVCIVASVDA). Disulfide bonds link C27–C74, C37–C51, C52–C97, and C72–C111.

It belongs to the plant LTP family.

Functionally, plant non-specific lipid-transfer proteins transfer phospholipids as well as galactolipids across membranes. May play a role in wax or cutin deposition in the cell walls of expanding epidermal cells and certain secretory tissues. The chain is Non-specific lipid-transfer protein 3 (LTP3) from Arabidopsis thaliana (Mouse-ear cress).